A 302-amino-acid chain; its full sequence is Nodulation protein D 3 (302 aa).

In terms of domain architecture, HTH lysR-type spans 6–63 (LDLNLLVALDALMIERNLTAAARSINLSQPAMSAAVRRLRSYFRDELFTMRGREFVPT). Residues 23–42 (LTAAARSINLSQPAMSAAVR) constitute a DNA-binding region (H-T-H motif).

The protein belongs to the LysR transcriptional regulatory family.

Its function is as follows. NodD regulates the expression of the nodABCFE genes which encode other nodulation proteins. NodD is also a negative regulator of its own expression. Binds flavonoids as inducers. The sequence is that of Nodulation protein D 3 (nodD3) from Rhizobium leguminosarum bv. phaseoli.